The following is a 154-amino-acid chain: UPF0178 protein GDI0551/Gdia_1457 (154 aa).

The protein belongs to the UPF0178 family.

The protein is UPF0178 protein GDI0551/Gdia_1457 of Gluconacetobacter diazotrophicus (strain ATCC 49037 / DSM 5601 / CCUG 37298 / CIP 103539 / LMG 7603 / PAl5).